The sequence spans 271 residues: uncharacterized protein (271 aa).

It belongs to the anhydro-N-acetylmuramic acid kinase family.

This is an uncharacterized protein from Yersinia enterocolitica.